The following is a 196-amino-acid chain: Large ribosomal subunit protein mL66 (196 aa).

The transit peptide at 1-34 directs the protein to the mitochondrion; that stretch reads MAALKALVSGCGRLLRGLLAGPAATSWSRLPARG.

The protein belongs to the bacterial ribosomal protein bS18 family. Mitochondrion-specific ribosomal protein mL66 subfamily. Component of the mitochondrial large ribosomal subunit (mt-LSU). Mature mammalian 55S mitochondrial ribosomes consist of a small (28S) and a large (39S) subunit. The 28S small subunit contains a 12S ribosomal RNA (12S mt-rRNA) and 30 different proteins. The 39S large subunit contains a 16S rRNA (16S mt-rRNA), a copy of mitochondrial valine transfer RNA (mt-tRNA(Val)), which plays an integral structural role, and 52 different proteins. mL66 forms a zinc-binding site with uL10m.

It is found in the mitochondrion. The polypeptide is Large ribosomal subunit protein mL66 (MRPS18A) (Homo sapiens (Human)).